The following is a 202-amino-acid chain: Small ribosomal subunit protein uS4 (202 aa).

The S4 RNA-binding domain occupies 94-157; sequence SRLDNLVYRM…KDLPIVAAGA (64 aa).

This sequence belongs to the universal ribosomal protein uS4 family. As to quaternary structure, part of the 30S ribosomal subunit. Contacts protein S5. The interaction surface between S4 and S5 is involved in control of translational fidelity.

Its function is as follows. One of the primary rRNA binding proteins, it binds directly to 16S rRNA where it nucleates assembly of the body of the 30S subunit. Functionally, with S5 and S12 plays an important role in translational accuracy. The sequence is that of Small ribosomal subunit protein uS4 from Malacoplasma penetrans (strain HF-2) (Mycoplasma penetrans).